The following is a 669-amino-acid chain: Potassium voltage-gated channel subfamily KQT member 1 (669 aa).

Over 1–120 (MDTASSPPNA…YNFLERPTGW (120 aa)) the chain is Cytoplasmic. At S27 the chain carries Phosphoserine; by PKA. Residues 121–142 (KCFVYHFTVFLIVLVCLIFSVL) form a helical membrane-spanning segment. At 143-153 (STIEQYAALAT) the chain is on the extracellular side. The chain crosses the membrane as a helical span at residues 154-176 (GTLFWMEIVLVVFFGTEYVVRLW). Residues 177–192 (SAGCRSKYVGIWGRLR) lie on the Cytoplasmic side of the membrane. Residues 193–218 (FARKPISIIDLIVVVASMVVLCVGSK) form a helical membrane-spanning segment. At 219-226 (GQVFATSA) the chain is on the extracellular side. A helical; Voltage-sensor transmembrane segment spans residues 227–242 (IRGIRFLQILRMLHVD). Residues 238–246 (MLHVDRQGG) form an interaction with KCNE3 region. Topologically, residues 243–260 (RQGGTWRLLGSVVFIHRQ) are cytoplasmic. Q244 contacts a 1,2-diacyl-sn-glycero-3-phospho-(1D-myo-inositol-4,5-bisphosphate). Residues 261–283 (ELITTLYIGFLGLIFSSYFVYLA) form a helical membrane-spanning segment. The Extracellular segment spans residues 284 to 299 (EKDAVNESGRIEFGSY). An N-linked (GlcNAc...) asparagine glycan is attached at N289. The segment at residues 300–320 (ADALWWGVVTVTTIGYGDKVP) is an intramembrane region (pore-forming). The Extracellular segment spans residues 321 to 322 (QT). The helical transmembrane segment at 323 to 348 (WVGKTIASCFSVFAISFFALPAGILG) threads the bilayer. The Cytoplasmic segment spans residues 349–669 (SGFALKVQQK…VPQTGPDEGS (321 aa)). Residues 370–382 (AAASLIQTAWRCY) are interaction with CALM. Residues S407 and S409 each carry the phosphoserine modification. Residues 515-529 (KVIRRMQYFVAKKKF) form an interaction with CALM; calcium-dependent region. Residues 535–572 (PYDVRDVIEQYSQGHLNLMVRIKELQRRLDQSIGKPSL) are interaction with KCNE1 C-terminus. A coiled-coil region spans residues 585–621 (SNTIGARLNRVEDKVTQLDQRLVIITDMLHQLLSLQQ). Residues 588–616 (IGARLNRVEDKVTQLDQRLVIITDMLHQL) form an interaction with AKAP9 region. The segment at 589-620 (GARLNRVEDKVTQLDQRLVIITDMLHQLLSLQ) is C-terminal assembly domain (tetramerization).

This sequence belongs to the potassium channel family. KQT (TC 1.A.1.15) subfamily. Kv7.1/KCNQ1 sub-subfamily. Tetramer. Heterotetramer with KCNE1; targets to the membrane raft. Interacts (via C-terminus) with CALM; forms a heterooctameric structure (with 4:4 KCNQ1:CALM stoichiometry) in a calcium-independent manner. Interacts with AKAP9; targets protein kinase A (PKA) catalytic and regulatory subunits and protein phosphatase 1 (PP1) to the KCNQ1-KCNE1 complex, allowing PKA-mediated phosphorylation and increase of delayed rectifier potassium channel activity. Interacts with KCNE2; form a heterooligomer complex that targets to the membrane raft and leading to currents with an apparently instantaneous activation, a rapid deactivation process and a linear current-voltage relationship and decreases the amplitude of the outward current. Interacts with AP2M1; mediates estrogen-induced internalization via clathrin-coated vesicles. Interacts with NEDD4L; promotes internalization and decreases I(Ks) currents. Interacts with USP2; counteracts the NEDD4L-specific down-regulation of I(Ks) and restore plasma membrane localization. Heterotetramer with KCNQ5; has a voltage-gated potassium channel activity. Interacts with KCNE3; produces a current with nearly instantaneous activation with a linear current-voltage relationship and alters membrane raft localization. Interacts with KCNE4; impairs KCNQ1 localization in lipid rafts and inhibits voltage-gated potassium channel activity. Interacts with KCNE5; impairs KCNQ1 localization in lipid rafts and only conducts current upon strong and continued depolarization. Interacts with SLC5A3; forms coregulatory channel-transporter complexes that modulate Na(+)-coupled myo-inositol influx through the transporter. Post-translationally, phosphorylation at Ser-27 by PKA; increases delayed rectifier potassium channel activity of the KCNQ1-KCNE1 complex through a macromolecular complex that includes PKA, PP1, and the targeting protein AKAP9. In terms of processing, ubiquitinated by NEDD4L; promotes internalization. The ubiquitinylated form is internalized through a clathrin-mediated endocytosis by interacting with AP2M1 and is recycled back to the cell membrane via RAB4A and RAB11A. Deubiquitinated by USP2; counteracts the NEDD4L-specific down-regulation of I(Ks) and restores the membrane localization.

It is found in the cell membrane. The protein resides in the cytoplasmic vesicle membrane. Its subcellular location is the early endosome. It localises to the membrane raft. The protein localises to the endoplasmic reticulum. It is found in the basolateral cell membrane. The protein resides in the apical cell membrane. It carries out the reaction K(+)(in) = K(+)(out). PIP2 molecule is essential to activate KCNQ channels by inducing the coupling of the voltage-sensing domain (VSD) and the pore-forming domain (PD). Upon channel activation, PIP2 disrupts the VSD-calmodulin/CALM interactions, causing the release of CALM from the VSD which triggers the opening of the gate. Calcium potentiates KCNQ1 channel current through calcium-bound CALM. Calcium-bound CALM competes with PIP2 to stabilize the channel open state. Its function is as follows. Pore-forming subunit of the voltage-gated potassium (Kv) channel involved in the regulation of cardiomyocyte excitability and important in normal development and functions of myocardium, inner ear, stomach and colon. Associates with KCNE beta subunits that modulates current kinetics. Induces a voltage-dependent by rapidly activating and slowly deactivating potassium-selective outward current. Also promotes a delayed voltage activated potassium current showing outward rectification characteristic. During beta-adrenergic receptor stimulation participates in cardiac repolarization by associating with KCNE1 to form the I(Ks) cardiac potassium current that increases the amplitude and slows down the activation kinetics of outward potassium current I(Ks). Muscarinic agonist oxotremorine-M strongly suppresses KCNQ1/KCNE1 current. When associated with KCNE3, forms the potassium channel that is important for cyclic AMP-stimulated intestinal secretion of chloride ions. This interaction with KCNE3 is reduced by 17beta-estradiol, resulting in the reduction of currents. During conditions of increased substrate load, maintains the driving force for proximal tubular and intestinal sodium ions absorption, gastric acid secretion, and cAMP-induced jejunal chloride ions secretion. Allows the provision of potassium ions to the luminal membrane of the secretory canaliculus in the resting state as well as during stimulated acid secretion. When associated with KCNE2, forms a heterooligomer complex leading to currents with an apparently instantaneous activation, a rapid deactivation process and a linear current-voltage relationship and decreases the amplitude of the outward current. When associated with KCNE4, inhibits voltage-gated potassium channel activity. When associated with KCNE5, this complex only conducts current upon strong and continued depolarization. Also forms a heterotetramer with KCNQ5 that has a voltage-gated potassium channel activity. Binds with phosphatidylinositol 4,5-bisphosphate. KCNQ1-KCNE2 channel associates with Na(+)-coupled myo-inositol symporter in the apical membrane of choroid plexus epithelium and regulates the myo-inositol gradient between blood and cerebrospinal fluid with an impact on neuron excitability. The polypeptide is Potassium voltage-gated channel subfamily KQT member 1 (Rattus norvegicus (Rat)).